The following is a 341-amino-acid chain: UDP-N-acetylenolpyruvoylglucosamine reductase (341 aa).

The 173-residue stretch at 13 to 185 (FGVEQSCLSM…TAVGLRLPKA (173 aa)) folds into the FAD-binding PCMH-type domain. Residue R161 is part of the active site. Residue S231 is the Proton donor of the active site. E327 is a catalytic residue.

Belongs to the MurB family. It depends on FAD as a cofactor.

Its subcellular location is the cytoplasm. It carries out the reaction UDP-N-acetyl-alpha-D-muramate + NADP(+) = UDP-N-acetyl-3-O-(1-carboxyvinyl)-alpha-D-glucosamine + NADPH + H(+). It participates in cell wall biogenesis; peptidoglycan biosynthesis. Functionally, cell wall formation. This is UDP-N-acetylenolpyruvoylglucosamine reductase from Shewanella sp. (strain MR-4).